We begin with the raw amino-acid sequence, 453 residues long: Ribulose bisphosphate carboxylase large chain (453 aa).

Residues 1-2 (MS) constitute a propeptide that is removed on maturation. Pro3 carries the post-translational modification N-acetylproline. Lys14 carries the N6,N6,N6-trimethyllysine modification. Substrate-binding residues include Asn123 and Thr173. Lys175 functions as the Proton acceptor in the catalytic mechanism. Lys177 provides a ligand contact to substrate. The Mg(2+) site is built by Lys201, Asp203, and Glu204. Lys201 is subject to N6-carboxylysine. The active-site Proton acceptor is His294. Substrate is bound by residues Arg295, His327, and Ser379.

The protein belongs to the RuBisCO large chain family. Type I subfamily. Heterohexadecamer of 8 large chains and 8 small chains; disulfide-linked. The disulfide link is formed within the large subunit homodimers. Mg(2+) serves as cofactor. In terms of processing, the disulfide bond which can form in the large chain dimeric partners within the hexadecamer appears to be associated with oxidative stress and protein turnover.

It is found in the plastid. It localises to the chloroplast. It carries out the reaction 2 (2R)-3-phosphoglycerate + 2 H(+) = D-ribulose 1,5-bisphosphate + CO2 + H2O. It catalyses the reaction D-ribulose 1,5-bisphosphate + O2 = 2-phosphoglycolate + (2R)-3-phosphoglycerate + 2 H(+). Functionally, ruBisCO catalyzes two reactions: the carboxylation of D-ribulose 1,5-bisphosphate, the primary event in carbon dioxide fixation, as well as the oxidative fragmentation of the pentose substrate in the photorespiration process. Both reactions occur simultaneously and in competition at the same active site. This chain is Ribulose bisphosphate carboxylase large chain, found in Galium album (White bedstraw).